Here is a 778-residue protein sequence, read N- to C-terminus: E3 UFM1-protein ligase 1 homolog (778 aa).

The segment at 404–477 (NNLSTSHDAD…TVQQSAGNTR (74 aa)) is disordered. The segment covering 445–457 (KSTKKHQRGRAAA) has biased composition (basic residues).

This sequence belongs to the UFL1 family.

Its function is as follows. E3 UFM1-protein ligase that mediates ufmylation of target proteins. In Drosophila virilis (Fruit fly), this protein is E3 UFM1-protein ligase 1 homolog.